Here is a 289-residue protein sequence, read N- to C-terminus: MAEQLEVVIITGMSGAGKTVAVQSFEDLGYFVIDNMIPSVATKFVDAVKQSGEITRMAMVMDSRSRGFYDQVVPCVAQLRGRSDLTLRLLFLEATDEELVSRYKESRRAHPLSHQDGVLPGIMRERQLLNDLKSQADLVVDTTTLTPRQLKQRITERFSPDEAHSFYVNVMSFGFKYGLPLDADLVIDVRFLPNPYYIPDLKYQTGNDPAVQAYVMDNPLAQNFYQHLYSLIEVALPGYIKEGKSSLTIAIGCTGGQHRSVTIANRLAADLKNNQYPVHVHHRDVDKAN.

12–19 is a binding site for ATP; sequence GMSGAGKT. Residue 62–65 coordinates GTP; the sequence is DSRS.

Belongs to the RapZ-like family.

Its function is as follows. Displays ATPase and GTPase activities. In Limosilactobacillus fermentum (strain NBRC 3956 / LMG 18251) (Lactobacillus fermentum), this protein is Nucleotide-binding protein LAF_0356.